The primary structure comprises 378 residues: UPF0284 protein MK0224 (378 aa).

This sequence belongs to the UPF0284 family.

The sequence is that of UPF0284 protein MK0224 from Methanopyrus kandleri (strain AV19 / DSM 6324 / JCM 9639 / NBRC 100938).